The chain runs to 231 residues: Dephospho-CoA kinase domain-containing protein (231 aa).

In terms of domain architecture, DPCK spans 3–207 (LVGLTGGIAS…RSLEYLPLRF (205 aa)). ATP is bound at residue 8-15 (GGIASGKS).

Belongs to the CoaE family.

This is Dephospho-CoA kinase domain-containing protein (DCAKD) from Homo sapiens (Human).